The sequence spans 208 residues: Thymidylate kinase (208 aa).

10–17 (GPDGSGKT) is a binding site for ATP.

It belongs to the thymidylate kinase family.

It carries out the reaction dTMP + ATP = dTDP + ADP. Functionally, phosphorylation of dTMP to form dTDP in both de novo and salvage pathways of dTTP synthesis. This is Thymidylate kinase from Listeria monocytogenes serotype 4b (strain CLIP80459).